The sequence spans 238 residues: Pyridoxine 5'-phosphate synthase (238 aa).

A 3-amino-2-oxopropyl phosphate-binding site is contributed by Asn-7. Residue 9-10 (DH) coordinates 1-deoxy-D-xylulose 5-phosphate. 3-amino-2-oxopropyl phosphate is bound at residue Arg-18. His-43 (proton acceptor) is an active-site residue. Arg-45 and His-50 together coordinate 1-deoxy-D-xylulose 5-phosphate. Residue Glu-70 is the Proton acceptor of the active site. Position 100 (Thr-100) interacts with 1-deoxy-D-xylulose 5-phosphate. The Proton donor role is filled by His-190. 3-amino-2-oxopropyl phosphate-binding positions include Gly-191 and 212–213 (GH).

This sequence belongs to the PNP synthase family. Homooctamer; tetramer of dimers.

Its subcellular location is the cytoplasm. It catalyses the reaction 3-amino-2-oxopropyl phosphate + 1-deoxy-D-xylulose 5-phosphate = pyridoxine 5'-phosphate + phosphate + 2 H2O + H(+). The protein operates within cofactor biosynthesis; pyridoxine 5'-phosphate biosynthesis; pyridoxine 5'-phosphate from D-erythrose 4-phosphate: step 5/5. Its function is as follows. Catalyzes the complicated ring closure reaction between the two acyclic compounds 1-deoxy-D-xylulose-5-phosphate (DXP) and 3-amino-2-oxopropyl phosphate (1-amino-acetone-3-phosphate or AAP) to form pyridoxine 5'-phosphate (PNP) and inorganic phosphate. The chain is Pyridoxine 5'-phosphate synthase from Prochlorococcus marinus subsp. pastoris (strain CCMP1986 / NIES-2087 / MED4).